A 188-amino-acid polypeptide reads, in one-letter code: Preprocaerulein type-1 (188 aa).

Positions 1–26 (MFKGILLCVLFAVLSANPLSQPEGFA) are cleaved as a signal peptide. The propeptide occupies 27–170 (DEERDVRGLA…ANDERRFADG (144 aa)). Residues 152–188 (LGGSPQQREANDERRFADGQQDYTGWMDFGRRNGEDD) form a disordered region. Tyrosine 174 bears the Sulfotyrosine mark. At phenylalanine 180 the chain carries Phenylalanine amide. The propeptide occupies 184 to 188 (NGEDD).

It belongs to the gastrin/cholecystokinin family. As to expression, expressed by the skin glands.

It is found in the secreted. The pharmacological activities of caerulein are quite similar to the physiological activities of gastrin and related peptides. In Xenopus laevis (African clawed frog), this protein is Preprocaerulein type-1.